We begin with the raw amino-acid sequence, 287 residues long: ATP synthase gamma chain (287 aa).

It belongs to the ATPase gamma chain family. As to quaternary structure, F-type ATPases have 2 components, CF(1) - the catalytic core - and CF(0) - the membrane proton channel. CF(1) has five subunits: alpha(3), beta(3), gamma(1), delta(1), epsilon(1). CF(0) has three main subunits: a, b and c.

It is found in the cell inner membrane. Its function is as follows. Produces ATP from ADP in the presence of a proton gradient across the membrane. The gamma chain is believed to be important in regulating ATPase activity and the flow of protons through the CF(0) complex. The sequence is that of ATP synthase gamma chain from Klebsiella pneumoniae subsp. pneumoniae (strain ATCC 700721 / MGH 78578).